We begin with the raw amino-acid sequence, 365 residues long: 1-deoxy-D-xylulose 5-phosphate reductoisomerase (365 aa).

NADPH is bound by residues Thr-7, Gly-8, Ser-9, Ile-10, Ala-31, Lys-32, Asn-33, and Asn-114. Lys-115 provides a ligand contact to 1-deoxy-D-xylulose 5-phosphate. Glu-116 is an NADPH binding site. Asp-134 contacts Mn(2+). Residues Ser-135, Glu-136, Ser-158, and His-181 each coordinate 1-deoxy-D-xylulose 5-phosphate. Glu-136 contributes to the Mn(2+) binding site. Gly-187 is a binding site for NADPH. 1-deoxy-D-xylulose 5-phosphate contacts are provided by Ser-194, Asn-199, Lys-200, and Glu-203. Residue Glu-203 participates in Mn(2+) binding.

The protein belongs to the DXR family. Mg(2+) is required as a cofactor. It depends on Mn(2+) as a cofactor.

The enzyme catalyses 2-C-methyl-D-erythritol 4-phosphate + NADP(+) = 1-deoxy-D-xylulose 5-phosphate + NADPH + H(+). Its pathway is isoprenoid biosynthesis; isopentenyl diphosphate biosynthesis via DXP pathway; isopentenyl diphosphate from 1-deoxy-D-xylulose 5-phosphate: step 1/6. Catalyzes the NADPH-dependent rearrangement and reduction of 1-deoxy-D-xylulose-5-phosphate (DXP) to 2-C-methyl-D-erythritol 4-phosphate (MEP). The chain is 1-deoxy-D-xylulose 5-phosphate reductoisomerase from Campylobacter curvus (strain 525.92).